A 655-amino-acid chain; its full sequence is p-hydroxybenzoic acid efflux pump subunit AaeB (655 aa).

11 consecutive transmembrane segments (helical) span residues 13–33 (FAVKLATAIVLALFVGFHFQL), 38–58 (WAVLTAAIVAAGPAFAAGGEP), 69–89 (LRIIGTFIGCIAGLVIIIAMI), 93–113 (LLMILVCCIWAGFCTWISSLV), 121–141 (WGLAGYTALIIVITIQPEPLL), 152–172 (EIVIGIVCAIMADLLFSPRSI), 370–390 (LFWLWTGWTSGSGAMVMIAVV), 407–427 (FIYGTLAALPLGLLYFLVIIP), 431–451 (QSMLLLCISLAVLGFFLGIEV), 459–479 (MGALASTINIIVLDNPMTFHF), and 482–502 (FLDSALGQIVGCVLAFTVILL).

It belongs to the aromatic acid exporter ArAE (TC 2.A.85) family.

It is found in the cell inner membrane. Its function is as follows. Forms an efflux pump with AaeA. Could function as a metabolic relief valve, allowing to eliminate certain compounds when they accumulate to high levels in the cell. In Escherichia coli O81 (strain ED1a), this protein is p-hydroxybenzoic acid efflux pump subunit AaeB.